We begin with the raw amino-acid sequence, 361 residues long: Alanine racemase (361 aa).

Residue K34 is the Proton acceptor; specific for D-alanine of the active site. K34 is subject to N6-(pyridoxal phosphate)lysine. A substrate-binding site is contributed by R129. Y254 (proton acceptor; specific for L-alanine) is an active-site residue. Residue M302 participates in substrate binding.

It belongs to the alanine racemase family. It depends on pyridoxal 5'-phosphate as a cofactor.

The catalysed reaction is L-alanine = D-alanine. It carries out the reaction L-serine = D-serine. Its pathway is amino-acid biosynthesis; D-alanine biosynthesis; D-alanine from L-alanine: step 1/1. Its function is as follows. Catalyzes the interconversion of L-alanine and D-alanine. Likely plays an important role in supplying D-alanine, which is an indispensable constituent in the biosynthesis of bacterial cell-wall peptidoglycan. To a lesser extent, is also able to racemize L-serine and D-serine. Does not act on other proteinogenic amino-acids. In Vibrio cholerae serotype O1 (strain ATCC 39315 / El Tor Inaba N16961), this protein is Alanine racemase (alr1).